The primary structure comprises 285 residues: tRNA (adenine(58)-N(1))-methyltransferase catalytic subunit TRMT61A (285 aa).

S2 is modified (N-acetylserine). Substrate stretches follow at residues 20-22 (LGH), 35-42 (QTQTRHGV), 64-65 (GW), 85-89 (QILYS), and 110-117 (SGTGSGSV). Residues L87, 114–116 (SGS), E135, R140, 163–164 (DV), and D181 each bind S-adenosyl-L-methionine. 2 substrate regions span residues 180–183 (LDIP) and 205–212 (SFSPCIEQ). T274 is a substrate binding site.

Belongs to the class I-like SAM-binding methyltransferase superfamily. TRM61 family. In terms of assembly, heterotetramer; composed of two copies of TRMT6 and two copies of TRMT61A.

The protein resides in the nucleus. The enzyme catalyses adenosine(58) in tRNA + S-adenosyl-L-methionine = N(1)-methyladenosine(58) in tRNA + S-adenosyl-L-homocysteine + H(+). The catalysed reaction is an adenosine in mRNA + S-adenosyl-L-methionine = an N(1)-methyladenosine in mRNA + S-adenosyl-L-homocysteine + H(+). Functionally, catalytic subunit of tRNA (adenine-N(1)-)-methyltransferase, which catalyzes the formation of N(1)-methyladenine at position 58 (m1A58) in initiator methionyl-tRNA. Catalytic subunit of mRNA N(1)-methyltransferase complex, which mediates methylation of adenosine residues at the N(1) position of a small subset of mRNAs: N(1) methylation takes place in tRNA T-loop-like structures of mRNAs and is only present at low stoichiometries. This chain is tRNA (adenine(58)-N(1))-methyltransferase catalytic subunit TRMT61A (TRMT61A), found in Bos taurus (Bovine).